We begin with the raw amino-acid sequence, 230 residues long: Urease accessory protein UreF (230 aa).

This sequence belongs to the UreF family. UreD, UreF and UreG form a complex that acts as a GTP-hydrolysis-dependent molecular chaperone, activating the urease apoprotein by helping to assemble the nickel containing metallocenter of UreC. The UreE protein probably delivers the nickel.

Its subcellular location is the cytoplasm. Required for maturation of urease via the functional incorporation of the urease nickel metallocenter. The polypeptide is Urease accessory protein UreF (Marinomonas sp. (strain MWYL1)).